Reading from the N-terminus, the 1332-residue chain is Aldehyde oxidase 1 (1332 aa).

The region spanning 4 to 91 (STLYFYVNGR…GAAVTTVEGV (88 aa)) is the 2Fe-2S ferredoxin-type domain. 4 residues coordinate [2Fe-2S] cluster: Cys43, Cys48, Cys51, and Cys73. Gln112 contributes to the Mo-molybdopterin binding site. 4 residues coordinate [2Fe-2S] cluster: Cys113, Cys116, Cys148, and Cys150. Cys150 provides a ligand contact to Mo-molybdopterin. The FAD-binding PCMH-type domain occupies 234-419 (FTGDRVTWIS…LSVTIPYSRK (186 aa)). Residues 262 to 269 (VVMGNTSV), Ala343, Ser352, His356, Asp365, and Leu409 each bind FAD. Residues 800–801 (AF), Met1041, 1082–1085 (GSVV), Gln1197, and Leu1262 each bind Mo-molybdopterin. The active-site Proton acceptor; for azaheterocycle hydroxylase activity is the Glu1264.

Belongs to the xanthine dehydrogenase family. Homodimer. Requires [2Fe-2S] cluster as cofactor. The cofactor is FAD. It depends on Mo-molybdopterin as a cofactor. In terms of tissue distribution, expressed in liver.

It localises to the cytoplasm. The enzyme catalyses an aldehyde + O2 + H2O = a carboxylate + H2O2 + H(+). It carries out the reaction retinal + O2 + H2O = retinoate + H2O2 + H(+). With respect to regulation, inhibited by menadione and isovanillin. Not inhibited by allopurinol, a xanthine dehydrogenase potent inhibitor. Functionally, oxidase with broad substrate specificity, oxidizing aromatic azaheterocycles, such as N1-methylnicotinamide, N-methylphthalazinium and phthalazine, as well as aldehydes, such as benzaldehyde, retinal, pyridoxal, and vanillin. Plays a key role in the metabolism of xenobiotics and drugs containing aromatic azaheterocyclic substituents. Participates in the bioactivation of prodrugs such as famciclovir, catalyzing the oxidation step from 6-deoxypenciclovir to penciclovir, which is a potent antiviral agent. Is probably involved in the regulation of reactive oxygen species homeostasis. May be a prominent source of superoxide generation via the one-electron reduction of molecular oxygen. May also catalyze nitric oxide (NO) production via the reduction of nitrite to NO with NADH or aldehyde as electron donor. May play a role in adipogenesis. This Cavia porcellus (Guinea pig) protein is Aldehyde oxidase 1.